The sequence spans 348 residues: Phosphate acyltransferase (348 aa).

This sequence belongs to the PlsX family. In terms of assembly, homodimer. Probably interacts with PlsY.

The protein localises to the cytoplasm. It catalyses the reaction a fatty acyl-[ACP] + phosphate = an acyl phosphate + holo-[ACP]. Its pathway is lipid metabolism; phospholipid metabolism. In terms of biological role, catalyzes the reversible formation of acyl-phosphate (acyl-PO(4)) from acyl-[acyl-carrier-protein] (acyl-ACP). This enzyme utilizes acyl-ACP as fatty acyl donor, but not acyl-CoA. The sequence is that of Phosphate acyltransferase from Francisella philomiragia subsp. philomiragia (strain ATCC 25017 / CCUG 19701 / FSC 153 / O#319-036).